The primary structure comprises 481 residues: Exodeoxyribonuclease I (481 aa).

An Exonuclease domain is found at 12-193 (LFYDYETFGK…SSDVYATMNI (182 aa)). Mg(2+) contacts are provided by Asp15, Glu17, and Asp186. A substrate-binding site is contributed by Glu17. Residues 202–350 (PKLFNFFFKY…KLKKFLCSIA (149 aa)) enclose the ExoI SH3-like domain. The ExoI C-terminal domain occupies 356–471 (NGSNVDLKMY…ELFEYVKYTR (116 aa)).

Monomer. Interacts with ssb (via C-terminus); this interaction stimulates the exonuclease activity by recruiting the enzyme to its substrate. It depends on Mg(2+) as a cofactor.

The catalysed reaction is Exonucleolytic cleavage in the 3'- to 5'-direction to yield nucleoside 5'-phosphates.. Degrades single-stranded DNA (ssDNA) in a highly processive manner. Also functions as a DNA deoxyribophosphodiesterase that releases deoxyribose-phosphate moieties following the cleavage of DNA at an apurinic/apyrimidinic (AP) site by either an AP endonuclease or AP lyase. The sequence is that of Exodeoxyribonuclease I (sbcB) from Buchnera aphidicola subsp. Baizongia pistaciae (strain Bp).